The primary structure comprises 289 residues: 3-methyl-2-oxobutanoate hydroxymethyltransferase (289 aa).

2 residues coordinate Mg(2+): Asp50 and Asp89. 3-methyl-2-oxobutanoate-binding positions include 50–51 (DS), Asp89, and Lys119. Residue Glu121 participates in Mg(2+) binding. Catalysis depends on Glu188, which acts as the Proton acceptor. The disordered stretch occupies residues 266-289 (AQHSFGMPEDEQRRWEENVSGADD).

It belongs to the PanB family. In terms of assembly, homodecamer; pentamer of dimers. Requires Mg(2+) as cofactor.

The protein resides in the cytoplasm. It carries out the reaction 3-methyl-2-oxobutanoate + (6R)-5,10-methylene-5,6,7,8-tetrahydrofolate + H2O = 2-dehydropantoate + (6S)-5,6,7,8-tetrahydrofolate. It participates in cofactor biosynthesis; (R)-pantothenate biosynthesis; (R)-pantoate from 3-methyl-2-oxobutanoate: step 1/2. Its function is as follows. Catalyzes the reversible reaction in which hydroxymethyl group from 5,10-methylenetetrahydrofolate is transferred onto alpha-ketoisovalerate to form ketopantoate. The chain is 3-methyl-2-oxobutanoate hydroxymethyltransferase from Oleidesulfovibrio alaskensis (strain ATCC BAA-1058 / DSM 17464 / G20) (Desulfovibrio alaskensis).